The chain runs to 506 residues: uncharacterized protein (506 aa).

Residue 282–289 (GIQGTGKS) coordinates ATP.

Belongs to the AAA ATPase family. Highly divergent.

Its subcellular location is the plastid. It localises to the chloroplast. This is an uncharacterized protein from Guillardia theta (Cryptophyte).